The chain runs to 142 residues: 3-hydroxyacyl-[acyl-carrier-protein] dehydratase FabZ (142 aa).

H47 is an active-site residue.

Belongs to the thioester dehydratase family. FabZ subfamily.

The protein resides in the cytoplasm. It catalyses the reaction a (3R)-hydroxyacyl-[ACP] = a (2E)-enoyl-[ACP] + H2O. Functionally, involved in unsaturated fatty acids biosynthesis. Catalyzes the dehydration of short chain beta-hydroxyacyl-ACPs and long chain saturated and unsaturated beta-hydroxyacyl-ACPs. The chain is 3-hydroxyacyl-[acyl-carrier-protein] dehydratase FabZ from Thermoanaerobacter pseudethanolicus (strain ATCC 33223 / 39E) (Clostridium thermohydrosulfuricum).